The chain runs to 42 residues: Large ribosomal subunit protein bL36 (42 aa).

This sequence belongs to the bacterial ribosomal protein bL36 family.

This Wolbachia pipientis subsp. Culex pipiens (strain wPip) protein is Large ribosomal subunit protein bL36.